The following is a 517-amino-acid chain: Phospholipase C C (517 aa).

The tat-type signal signal peptide spans 1–39 (MVSQGAFAGMSRRAFLAKAAGAGAAAVLTDWAAPVIEKA).

This sequence belongs to the bacterial phospholipase C family. Post-translationally, predicted to be exported by the Tat system. The position of the signal peptide cleavage has not been experimentally proven.

Its subcellular location is the secreted. It localises to the cell wall. It carries out the reaction a 1,2-diacyl-sn-glycero-3-phosphocholine + H2O = phosphocholine + a 1,2-diacyl-sn-glycerol + H(+). The catalysed reaction is 1,2-dihexadecanoyl-sn-glycero-3-phosphocholine + H2O = 1,2-dihexadecanoyl-sn-glycerol + phosphocholine + H(+). Involved in virulence. Induces cytotoxic effects on mouse macrophage cell lines, via direct or indirect enzymatic hydrolysis of cell membrane phospholipids. Hydrolyzes phosphatidylcholine. Does not have hemolytic activity. The protein is Phospholipase C C of Mycobacterium tuberculosis (strain ATCC 25618 / H37Rv).